We begin with the raw amino-acid sequence, 58 residues long: Small ribosomal subunit protein bS21 (58 aa).

Positions 25–58 are disordered; sequence SKSGTLQEYRKREHYEKPSVKRKKKSEAARKRKF. Over residues 32–43 the composition is skewed to basic and acidic residues; the sequence is EYRKREHYEKPS. The span at 44 to 58 shows a compositional bias: basic residues; the sequence is VKRKKKSEAARKRKF.

This sequence belongs to the bacterial ribosomal protein bS21 family.

The polypeptide is Small ribosomal subunit protein bS21 (Oceanobacillus iheyensis (strain DSM 14371 / CIP 107618 / JCM 11309 / KCTC 3954 / HTE831)).